The primary structure comprises 398 residues: Vacuolar protease A (398 aa).

Positions 1-18 (MKSTSLLTASVLLGSASA) are cleaved as a signal peptide. A propeptide spans 19-70 (AVHKLKLNKVPLDEQLYTHNIDAHVRALGQKYMGIRPNVHQELLEENSLNDM) (activation peptide). In terms of domain architecture, Peptidase A1 spans 85–395 (YFSEISLGTP…DLGNNAVGLA (311 aa)). Aspartate 103 is an active-site residue. A disulfide bridge links cysteine 116 with cysteine 121. N-linked (GlcNAc...) asparagine glycosylation is present at asparagine 138. The active site involves aspartate 287. The cysteines at positions 321 and 354 are disulfide-linked. The N-linked (GlcNAc...) asparagine glycan is linked to asparagine 338.

The protein belongs to the peptidase A1 family.

Its subcellular location is the vacuole lumen. The protein resides in the secreted. It carries out the reaction Hydrolysis of proteins with broad specificity for peptide bonds. Cleaves -Leu-Leu-|-Val-Tyr- bond in a synthetic substrate. Does not act on esters of Tyr or Arg.. Vacuolar aspartic endopeptidase which is probably also secreted and contributes to virulence. In Aspergillus fumigatus (strain ATCC MYA-4609 / CBS 101355 / FGSC A1100 / Af293) (Neosartorya fumigata), this protein is Vacuolar protease A (pep2).